The following is a 533-amino-acid chain: Inositol-3-phosphate synthase (533 aa).

Threonine 48 carries the phosphothreonine modification. Residues glycine 74, glycine 75, asparagine 76, asparagine 77, and aspartate 148 each contribute to the NAD(+) site. Residues serine 177 and serine 184 each carry the phosphoserine modification. NAD(+) contacts are provided by serine 184, isoleucine 185, glutamine 195, aspartate 196, arginine 198, threonine 244, alanine 245, asparagine 246, threonine 247, glycine 295, serine 296, aspartate 320, leucine 321, serine 323, asparagine 354, asparagine 355, and aspartate 356. Residue serine 296 is modified to Phosphoserine. Serine 368 carries the phosphoserine modification. Residue lysine 369 coordinates NAD(+). Serine 374 bears the Phosphoserine mark. NAD(+)-binding residues include glycine 409, aspartate 410, aspartate 438, and serine 439.

The protein belongs to the myo-inositol 1-phosphate synthase family. In terms of assembly, homotetramer. It depends on NAD(+) as a cofactor. Phosphorylation at Ser-184 and Ser-374 is associated with a decrease in activity. Increasingly phosphorylated in presence of valproate.

Its subcellular location is the cytoplasm. It catalyses the reaction D-glucose 6-phosphate = 1D-myo-inositol 3-phosphate. The protein operates within polyol metabolism; myo-inositol biosynthesis; myo-inositol from D-glucose 6-phosphate: step 1/2. Competitively inhibited by myo-2-inosose 1-phosphate, which is also an intermediate in the catalytic reaction. Competitively inhibited by 2-deoxy-myo-inositol 1-phosphate (dMIP), 1-deoxy-1-(phosphonomethyl)-myo-2-inosose (DPMI), dihydroxyacetone phosphate (DHAP), 6-deoxy-D-glucose 6-(E)-vinylhomophosphonate, 6-deoxy-D-glucitol 6-(E)-vinylhomophosphonate, 2,6-dideoxy-D-glucose 6-(E)-vinylhomophosphonate and 2,6-dideoxy-D-glucitol 6-(E)-vinylhomophosphonate. Inhibited by 2-deoxyglucitol 6-phosphate (dgtolP). Key enzyme in myo-inositol biosynthesis pathway that catalyzes the conversion of glucose 6-phosphate to 1-myo-inositol 1-phosphate in a NAD-dependent manner. Rate-limiting enzyme in the synthesis of all inositol-containing compounds. In Saccharomyces cerevisiae (strain ATCC 204508 / S288c) (Baker's yeast), this protein is Inositol-3-phosphate synthase (INO1).